We begin with the raw amino-acid sequence, 974 residues long: Leucine-rich repeat receptor-like kinase protein SUNN (974 aa).

An N-terminal signal peptide occupies residues 1–20; the sequence is MKNITCYLLLLCMLFTTCYS. N75, N104, N123, and N136 each carry an N-linked (GlcNAc...) asparagine glycan. 20 LRR repeats span residues 92 to 116, 117 to 141, 143 to 165, 166 to 188, 189 to 213, 238 to 262, 263 to 286, 288 to 309, 310 to 334, 335 to 358, 360 to 382, 383 to 406, 407 to 430, 431 to 454, 456 to 477, 478 to 501, 503 to 525, 527 to 549, 550 to 573, and 574 to 598; these read LNML…LSKL, TSLR…TFGM, KLEA…IVSL, MKLK…SYSE, FQKL…LSKL, IKSL…LGNL, ENLD…LSSM, SLMS…TFSK, LKNL…IGDL, PNLE…LGSN, KFIY…LCKS, KKLK…IGPC, KSLE…IFQL, PSVQ…ISGN, LGNL…MKNL, RSLQ…VFAL, VLTR…VTQC, SLTA…MKNL, KVLS…IRFM, and TSLT…QFLV. 2 N-linked (GlcNAc...) asparagine glycosylation sites follow: N250 and N274. N312 and N346 each carry an N-linked (GlcNAc...) asparagine glycan. 2 N-linked (GlcNAc...) asparagine glycosylation sites follow: N508 and N513. N-linked (GlcNAc...) asparagine glycosylation is found at N556 and N585. A helical transmembrane segment spans residues 635 to 655; sequence VVIAIVFATAVLMVIVTLHMM. One can recognise a Protein kinase domain in the interval 685–972; the sequence is LKEENIIGKG…PPHSTSHNLI (288 aa). ATP is bound by residues 691-699 and K713; that span reads IGKGGAGIV. Catalysis depends on D810, which acts as the Proton acceptor.

The protein belongs to the protein kinase superfamily. Ser/Thr protein kinase family. Expressed in roots and shoots. Expressed in the vasculature of leaves, petioles, stems and roots.

The protein resides in the cell membrane. It carries out the reaction L-seryl-[protein] + ATP = O-phospho-L-seryl-[protein] + ADP + H(+). The enzyme catalyses L-threonyl-[protein] + ATP = O-phospho-L-threonyl-[protein] + ADP + H(+). In terms of biological role, LRR receptor kinase involved in the regulation of root growth and root nodule organogenesis. Involved in long distance nodulation signaling events. Involved in the autoregulation of nodulation (AON), a long distance systemic signaling from root to shoot and back again, which allows legumes to limit the number of root nodules formed based on available nitrogen and previous rhizobial colonization. Acts from shoot to root to control AON. Interacts with CLE12 and CLE13 signaling to control nodule numbers. Required for the modulation of shoot-to-root auxin transport in response to altered nitrogen tissue concentrations and in the absence of rhizobia. Shoot-to-root auxin transport influences lateral root density and length. Involved in the regulation of root colonization by arbuscular mycorrhizal (AM) fungi. Interacts with CLE33 and CL53 signaling to repress strigolactone biosynthetic genes and strigolactone content in the roots, and consequently reduces the promotion of further colonization by AM fungi. This is Leucine-rich repeat receptor-like kinase protein SUNN from Medicago truncatula (Barrel medic).